The chain runs to 101 residues: Small ribosomal subunit protein uS14 (101 aa).

This sequence belongs to the universal ribosomal protein uS14 family. As to quaternary structure, part of the 30S ribosomal subunit. Contacts proteins S3 and S10.

Binds 16S rRNA, required for the assembly of 30S particles and may also be responsible for determining the conformation of the 16S rRNA at the A site. This is Small ribosomal subunit protein uS14 from Salmonella paratyphi A (strain ATCC 9150 / SARB42).